The sequence spans 428 residues: 3-phosphoshikimate 1-carboxyvinyltransferase (428 aa).

Lysine 23, serine 24, and arginine 28 together coordinate 3-phosphoshikimate. Lysine 23 provides a ligand contact to phosphoenolpyruvate. The phosphoenolpyruvate site is built by glycine 97 and arginine 125. The 3-phosphoshikimate site is built by serine 170, serine 171, glutamine 172, serine 198, aspartate 314, asparagine 337, and lysine 341. Residue glutamine 172 participates in phosphoenolpyruvate binding. The active-site Proton acceptor is aspartate 314. Phosphoenolpyruvate-binding residues include arginine 345, arginine 387, and lysine 412.

Belongs to the EPSP synthase family. As to quaternary structure, monomer.

The protein localises to the cytoplasm. The enzyme catalyses 3-phosphoshikimate + phosphoenolpyruvate = 5-O-(1-carboxyvinyl)-3-phosphoshikimate + phosphate. It functions in the pathway metabolic intermediate biosynthesis; chorismate biosynthesis; chorismate from D-erythrose 4-phosphate and phosphoenolpyruvate: step 6/7. In terms of biological role, catalyzes the transfer of the enolpyruvyl moiety of phosphoenolpyruvate (PEP) to the 5-hydroxyl of shikimate-3-phosphate (S3P) to produce enolpyruvyl shikimate-3-phosphate and inorganic phosphate. In Yersinia pestis bv. Antiqua (strain Antiqua), this protein is 3-phosphoshikimate 1-carboxyvinyltransferase.